Here is a 105-residue protein sequence, read N- to C-terminus: Putative membrane protein insertion efficiency factor (105 aa).

Residues 68–105 form a disordered region; sequence FHPGGLDPVPPRRNESGTEISDARPGSDGEASPGAPGL. Positions 77–94 are enriched in basic and acidic residues; it reads PPRRNESGTEISDARPGS.

The protein belongs to the UPF0161 family.

It is found in the cell membrane. Functionally, could be involved in insertion of integral membrane proteins into the membrane. In Thermobifida fusca (strain YX), this protein is Putative membrane protein insertion efficiency factor.